We begin with the raw amino-acid sequence, 381 residues long: Arrestin homolog (381 aa).

It belongs to the arrestin family.

This Heliothis virescens (Tobacco budworm moth) protein is Arrestin homolog.